Reading from the N-terminus, the 230-residue chain is 2,3-bisphosphoglycerate-dependent phosphoglycerate mutase (230 aa).

Residues 10 to 17, 23 to 24, Arg-62, 89 to 92, Lys-100, 116 to 117, and 185 to 186 each bind substrate; these read RHGQSKWN, TG, ERHY, RR, and GN. The Tele-phosphohistidine intermediate role is filled by His-11. Glu-89 serves as the catalytic Proton donor/acceptor.

The protein belongs to the phosphoglycerate mutase family. BPG-dependent PGAM subfamily. In terms of assembly, homodimer.

The catalysed reaction is (2R)-2-phosphoglycerate = (2R)-3-phosphoglycerate. Its pathway is carbohydrate degradation; glycolysis; pyruvate from D-glyceraldehyde 3-phosphate: step 3/5. In terms of biological role, catalyzes the interconversion of 2-phosphoglycerate and 3-phosphoglycerate. The polypeptide is 2,3-bisphosphoglycerate-dependent phosphoglycerate mutase (Buchnera aphidicola subsp. Schizaphis graminum (strain Sg)).